The chain runs to 282 residues: MATYLIGDVHGCYDELIALLHQVEFTPGSDTLWLTGDLVARGPGSLEVLRYVKSLGDCVRLVLGNHDLHLLAVFAGISRNKPKDRLTPLLEAPDADELLNWLRRQPLLQVDEEKKLVMAHAGITPQWDLQTAKDCARDVEAVLSSDSYPFFLDAMYGDMPNNWTPELTGLARLRFITNAFTRMRYCFPNGQLDMYSKESPENAPAPLKPWFAIPGPVSEAYSIVFGHWASLEGKGTPEGIYGLDTGCCWGGDLTCLRWEDKRYFVQPSNRHLDSGKGEAVNA.

It belongs to the Ap4A hydrolase family.

It carries out the reaction P(1),P(4)-bis(5'-adenosyl) tetraphosphate + H2O = 2 ADP + 2 H(+). In terms of biological role, hydrolyzes diadenosine 5',5'''-P1,P4-tetraphosphate to yield ADP. This Citrobacter koseri (strain ATCC BAA-895 / CDC 4225-83 / SGSC4696) protein is Bis(5'-nucleosyl)-tetraphosphatase, symmetrical.